Consider the following 85-residue polypeptide: uncharacterized protein (85 aa).

Disordered stretches follow at residues 1–22 (MFAP…TSGF) and 41–85 (EKER…SFLR). Residues 75-85 (FPSNYRGSFLR) are compositionally biased toward polar residues.

This is an uncharacterized protein from Dryophytes versicolor (chameleon treefrog).